Consider the following 393-residue polypeptide: Phosphopentomutase (393 aa).

The Mn(2+) site is built by Asp-13, Asp-286, His-291, Asp-327, His-328, and His-339.

Belongs to the phosphopentomutase family. Requires Mn(2+) as cofactor.

The protein localises to the cytoplasm. It carries out the reaction 2-deoxy-alpha-D-ribose 1-phosphate = 2-deoxy-D-ribose 5-phosphate. It catalyses the reaction alpha-D-ribose 1-phosphate = D-ribose 5-phosphate. The protein operates within carbohydrate degradation; 2-deoxy-D-ribose 1-phosphate degradation; D-glyceraldehyde 3-phosphate and acetaldehyde from 2-deoxy-alpha-D-ribose 1-phosphate: step 1/2. Isomerase that catalyzes the conversion of deoxy-ribose 1-phosphate (dRib-1-P) and ribose 1-phosphate (Rib-1-P) to deoxy-ribose 5-phosphate (dRib-5-P) and ribose 5-phosphate (Rib-5-P), respectively. In Symbiobacterium thermophilum (strain DSM 24528 / JCM 14929 / IAM 14863 / T), this protein is Phosphopentomutase.